The chain runs to 272 residues: MSPATVLDSILEGVRADVAAREALISLSEIKAAAAAAPPPLDVMAALREPGIGVIAEVKRASPSAGSLATIADPAKLARAYEDGGARIISVLTEERRFHGSLDDLDAVRAAVSIPVLRKDFVVQPYQIHEARAHGADMLLLIVAALEQSALVSMLDRTESLGMTALVEVHTEEEADRALRAGAKVIGVNARDLATLEVDRDCFARIAPGLPSNVIRIAESGVRGTGDLLAYAGAGADAVLVGEGLVKSGDPRAAVADLVTAGTHPSCPKPAR.

The protein belongs to the TrpC family.

It catalyses the reaction 1-(2-carboxyphenylamino)-1-deoxy-D-ribulose 5-phosphate + H(+) = (1S,2R)-1-C-(indol-3-yl)glycerol 3-phosphate + CO2 + H2O. It functions in the pathway amino-acid biosynthesis; L-tryptophan biosynthesis; L-tryptophan from chorismate: step 4/5. This Mycolicibacterium paratuberculosis (strain ATCC BAA-968 / K-10) (Mycobacterium paratuberculosis) protein is Indole-3-glycerol phosphate synthase.